A 220-amino-acid polypeptide reads, in one-letter code: MVYKLVLLFCIASLGYSVEYKNTICPPRQDYRYWYFAAELTIGVNYDINSTIIGECYMSESYIDRNANIVLTGYGLEINMTIMDTDQRFVAAAEGVGKDNKLSVMLFTTQRLDKVHHNISVIITCMEMNCGTTKYNSDLPESIHHKSSCDITINGSCVTCVNLETDPTKINPHYLHPKDKYLYHNSKYGMRGSYGVTFIDELNQCLLDIKELSYDICYRE.

A signal peptide spans 1-17; it reads MVYKLVLLFCIASLGYS.

The protein belongs to the orthopoxvirus OPG038 family. In terms of assembly, homooligomer. Interacts with host CD80 and CD86 when secreted. Post-translationally, glycosylated by host.

The protein localises to the host endoplasmic reticulum. It localises to the secreted. Plays a role in immune evasion. When secreted, inhibits T-cell activation by preventing the binding of host CD80 and CD86 to soluble CTLA4 and CD28. In the infected cell, may inhibits host NF kappa B activation. This Variola virus (isolate Human/India/Ind3/1967) (VARV) protein is Early protein OPG038 (OPG038).